Here is an 802-residue protein sequence, read N- to C-terminus: Probable inactive leucine-rich repeat receptor-like protein kinase At3g03770 (802 aa).

The N-terminal stretch at 1 to 26 (MEKLYCGMPLLLLVLLLASIDGSTQL) is a signal peptide. Topologically, residues 27 to 391 (QSSQSQTLLR…RNKVSKVGIA (365 aa)) are extracellular. Residues N52 and N83 are each glycosylated (N-linked (GlcNAc...) asparagine). LRR repeat units follow at residues 71–94 (EDSV…SFSI), 104–128 (LPDV…INRL), 129–152 (SSLE…LSSL), 153–176 (ATLQ…IDSL), 177–200 (PSLA…LSSL), 201–225 (SGLR…HLTN), 227–244 (QVLD…PRLS), 245–268 (NKLV…EVSS), 269–293 (LYQL…LMSL), 294–317 (PAIT…LSCN), and 319–341 (QLMF…LKPS). An N-linked (GlcNAc...) asparagine glycan is attached at N135. An N-linked (GlcNAc...) asparagine glycan is attached at N190. Residues N300 and N313 are each glycosylated (N-linked (GlcNAc...) asparagine). Residues 392–412 (LGVTASILGVLLLAGALFVVL) form a helical membrane-spanning segment. Over 413–802 (RRLNAKKTVT…RDSGCEEHER (390 aa)) the chain is Cytoplasmic. Residues 477–759 (FESSAFMGEG…FASQVQEGWL (283 aa)) enclose the Protein kinase domain. Residues 761 to 802 (NSNPSSNLGSPSPAASSLPPPSRLHVTTLESPRDSGCEEHER) are disordered. Residues 762-777 (SNPSSNLGSPSPAASS) are compositionally biased toward low complexity. A compositionally biased stretch (basic and acidic residues) spans 791–802 (SPRDSGCEEHER).

It belongs to the protein kinase superfamily. Ser/Thr protein kinase family.

It is found in the cell membrane. This chain is Probable inactive leucine-rich repeat receptor-like protein kinase At3g03770, found in Arabidopsis thaliana (Mouse-ear cress).